Here is a 208-residue protein sequence, read N- to C-terminus: Large ribosomal subunit protein uL3 (208 aa).

Residues glycine 116–alanine 148 are disordered.

It belongs to the universal ribosomal protein uL3 family. In terms of assembly, part of the 50S ribosomal subunit. Forms a cluster with proteins L14 and L19.

In terms of biological role, one of the primary rRNA binding proteins, it binds directly near the 3'-end of the 23S rRNA, where it nucleates assembly of the 50S subunit. The sequence is that of Large ribosomal subunit protein uL3 from Streptococcus pyogenes serotype M5 (strain Manfredo).